The sequence spans 312 residues: Putative S-adenosyl-L-methionine-dependent methyltransferase BCG_1768c (312 aa).

Residues aspartate 130 and 159-160 contribute to the S-adenosyl-L-methionine site; that span reads DL.

The protein belongs to the UPF0677 family.

Exhibits S-adenosyl-L-methionine-dependent methyltransferase activity. The polypeptide is Putative S-adenosyl-L-methionine-dependent methyltransferase BCG_1768c (Mycobacterium bovis (strain BCG / Pasteur 1173P2)).